The sequence spans 521 residues: Phospholipase C B (521 aa).

Positions 1-39 form a signal peptide, tat-type signal; that stretch reads MGSEHPVDGMTRRQFFAKAAAATTAGAFMSLAGPIIEKA. The tract at residues 501 to 521 is disordered; sequence FPQSMPTQETAPTRGIPSGLC.

It belongs to the bacterial phospholipase C family. Predicted to be exported by the Tat system. The position of the signal peptide cleavage has not been experimentally proven.

It localises to the secreted. Its subcellular location is the cell wall. The catalysed reaction is a 1,2-diacyl-sn-glycero-3-phosphocholine + H2O = phosphocholine + a 1,2-diacyl-sn-glycerol + H(+). Functionally, involved in virulence. Induces cytotoxic effects on mouse macrophage cell lines, via direct or indirect enzymatic hydrolysis of cell membrane phospholipids. Hydrolyzes phosphatidylcholine. The chain is Phospholipase C B from Mycobacterium tuberculosis (strain CDC 1551 / Oshkosh).